A 277-amino-acid polypeptide reads, in one-letter code: tRNA pseudouridine synthase A (277 aa).

D57 acts as the Nucleophile in catalysis. Substrate is bound at residue Y115.

It belongs to the tRNA pseudouridine synthase TruA family. As to quaternary structure, homodimer.

It catalyses the reaction uridine(38/39/40) in tRNA = pseudouridine(38/39/40) in tRNA. Formation of pseudouridine at positions 38, 39 and 40 in the anticodon stem and loop of transfer RNAs. The sequence is that of tRNA pseudouridine synthase A from Nitratidesulfovibrio vulgaris (strain DSM 19637 / Miyazaki F) (Desulfovibrio vulgaris).